The primary structure comprises 339 residues: Anthranilate phosphoribosyltransferase (339 aa).

5-phospho-alpha-D-ribose 1-diphosphate contacts are provided by residues G79, 82–83, T87, 89–92, 107–115, and S119; these read GD, NVST, and KHGNRSVSS. G79 serves as a coordination point for anthranilate. S91 is a Mg(2+) binding site. Anthranilate is bound at residue N110. Position 165 (R165) interacts with anthranilate. Residues D224 and E225 each coordinate Mg(2+).

The protein belongs to the anthranilate phosphoribosyltransferase family. In terms of assembly, homodimer. Mg(2+) is required as a cofactor.

It carries out the reaction N-(5-phospho-beta-D-ribosyl)anthranilate + diphosphate = 5-phospho-alpha-D-ribose 1-diphosphate + anthranilate. Its pathway is amino-acid biosynthesis; L-tryptophan biosynthesis; L-tryptophan from chorismate: step 2/5. Its function is as follows. Catalyzes the transfer of the phosphoribosyl group of 5-phosphorylribose-1-pyrophosphate (PRPP) to anthranilate to yield N-(5'-phosphoribosyl)-anthranilate (PRA). The polypeptide is Anthranilate phosphoribosyltransferase (Caldivirga maquilingensis (strain ATCC 700844 / DSM 13496 / JCM 10307 / IC-167)).